An 83-amino-acid chain; its full sequence is Ardiscretin (83 aa).

The signal sequence occupies residues 1–20 (MKGMIMLISCLMLIDVVVES). The region spanning 21-82 (KNGYIIEPKG…IFDYYNNKCG (62 aa)) is the LCN-type CS-alpha/beta domain. 4 cysteine pairs are disulfide-bonded: Cys31–Cys81, Cys35–Cys57, Cys43–Cys62, and Cys47–Cys64. Cys81 is modified (cysteine amide).

In terms of tissue distribution, expressed by the venom gland.

The protein resides in the secreted. Inhibits the sodium (Nav) currents in an apparent irreversible manner. Produces small depolarization and induces repetitive firing in squid axons. Is specific for arthropods (crickets, triatomides, crabs and squids), but is non-toxic to mice. Shows antibacterial activity against both Gram-positive and Gram-negative bacteria. This chain is Ardiscretin, found in Tityus discrepans (Venezuelan scorpion).